A 346-amino-acid chain; its full sequence is N(4)-(beta-N-acetylglucosaminyl)-L-asparaginase (346 aa).

An N-terminal signal peptide occupies residues 1–23 (MERKSNLSLLLLLLVLGMPLVRG). Asn-38 carries an N-linked (GlcNAc...) asparagine glycan. 2 disulfide bridges follow: Cys-64-Cys-69 and Cys-163-Cys-179. Thr-206 serves as the catalytic Nucleophile. Residues 234 to 237 (RVGD) and 257 to 260 (TGDG) each bind substrate. Cys-286 and Cys-306 are disulfide-bonded. A glycan (N-linked (GlcNAc...) asparagine) is linked at Asn-310. Cys-317 and Cys-345 are oxidised to a cystine.

The protein belongs to the Ntn-hydrolase family. As to quaternary structure, heterotetramer of two alpha and two beta chains arranged as a dimer of alpha/beta heterodimers. In terms of processing, cleaved into an alpha and beta chain by autocatalysis; this activates the enzyme. The N-terminal residue of the beta subunit is responsible for the nucleophile hydrolase activity. Post-translationally, N-glycosylated.

The protein resides in the lysosome. It catalyses the reaction N(4)-(beta-N-acetyl-D-glucosaminyl)-L-asparagine + H2O = N-acetyl-beta-D-glucosaminylamine + L-aspartate + H(+). Cleaves the GlcNAc-Asn bond which joins oligosaccharides to the peptide of asparagine-linked glycoproteins. In Mus musculus (Mouse), this protein is N(4)-(beta-N-acetylglucosaminyl)-L-asparaginase (Aga).